Here is a 398-residue protein sequence, read N- to C-terminus: Phosphoglycerate kinase (398 aa).

Substrate contacts are provided by residues 23-25 (DFN), arginine 38, 61-64 (HMGK), arginine 122, and arginine 155. ATP contacts are provided by residues lysine 206, glycine 297, glutamate 328, and 354 to 357 (GGDS).

It belongs to the phosphoglycerate kinase family. Monomer.

The protein resides in the cytoplasm. The catalysed reaction is (2R)-3-phosphoglycerate + ATP = (2R)-3-phospho-glyceroyl phosphate + ADP. It functions in the pathway carbohydrate degradation; glycolysis; pyruvate from D-glyceraldehyde 3-phosphate: step 2/5. In Clostridium botulinum (strain 657 / Type Ba4), this protein is Phosphoglycerate kinase.